A 515-amino-acid chain; its full sequence is Histidine ammonia-lyase (515 aa).

A cross-link (5-imidazolinone (Ala-Gly)) is located at residues A142–G144. S143 bears the 2,3-didehydroalanine (Ser) mark.

Belongs to the PAL/histidase family. In terms of processing, contains an active site 4-methylidene-imidazol-5-one (MIO), which is formed autocatalytically by cyclization and dehydration of residues Ala-Ser-Gly.

It localises to the cytoplasm. The catalysed reaction is L-histidine = trans-urocanate + NH4(+). The protein operates within amino-acid degradation; L-histidine degradation into L-glutamate; N-formimidoyl-L-glutamate from L-histidine: step 1/3. The protein is Histidine ammonia-lyase of Bradyrhizobium sp. (strain BTAi1 / ATCC BAA-1182).